The sequence spans 91 residues: Mercuric transport protein periplasmic component (91 aa).

The N-terminal stretch at 1-19 (MKKLFASLAIAAVVAPVWA) is a signal peptide. The HMA domain maps to 22-88 (QTVTLSVPGM…ATEDAGYPSS (67 aa)). 2 residues coordinate Hg(2+): cysteine 33 and cysteine 36.

Belongs to the MerP family. Monomer.

The protein localises to the periplasm. Its function is as follows. Involved in mercury resistance. Acts as a mercury scavenger that specifically binds to a mercuric ion in the periplasm and probably passes it to the cytoplasmic mercuric reductase MerA via the mercuric transport protein MerT. The protein is Mercuric transport protein periplasmic component of Serratia marcescens.